The sequence spans 473 residues: Beta-secretase 1 (473 aa).

The N-terminal stretch at 1 to 21 is a signal peptide; it reads MAPALPWLLLWVGSGVLPVHG. Positions 22 to 45 are excised as a propeptide; the sequence is TQDGIRLPLRSGLAGAPLGLRLPR. Residues 22-429 lie on the Extracellular side of the membrane; sequence TQDGIRLPLR…PQTDESTLMT (408 aa). The Peptidase A1 domain occupies 72–388; it reads YYVEMTVGSP…DRARKRIGFA (317 aa). Asp90 is a catalytic residue. Lys123 bears the N6-acetyllysine mark. 3 N-linked (GlcNAc...) asparagine glycosylation sites follow: Asn150, Asn169, and Asn195. Cystine bridges form between Cys188-Cys392, Cys250-Cys415, and Cys302-Cys352. 3 positions are modified to N6-acetyllysine: Lys247, Lys251, and Lys257. Asp261 is a catalytic residue. N6-acetyllysine is present on residues Lys271, Lys272, and Lys279. Asn326 carries an N-linked (GlcNAc...) asparagine glycan. Residues 430-450 form a helical membrane-spanning segment; sequence IAYVMAAICALFMLPLCLMVC. S-palmitoyl cysteine attachment occurs at residues Cys446, Cys450, Cys454, and Cys457. The Cytoplasmic segment spans residues 451–473; that stretch reads QWRCLRCLRHQHDDFADDISLLK. The segment at 451–473 is interaction with RTN3; sequence QWRCLRCLRHQHDDFADDISLLK. The DXXLL signature appears at 468 to 472; that stretch reads DISLL. Ser470 is modified (phosphoserine). Lys473 is covalently cross-linked (Glycyl lysine isopeptide (Lys-Gly) (interchain with G-Cter in ubiquitin)).

It belongs to the peptidase A1 family. In terms of assembly, monomer. Interacts (via DXXLL motif) with GGA1, GGA2 and GGA3 (via their VHS domain); the interaction highly increases when BACE1 is phosphorylated at Ser-470. Interacts with RTN1; RTN2; RTN3 and RTN4; the interaction leads to inhibition of amyloid precursor protein processing. Interacts with SNX6. Interacts with PCSK9. Interacts with NAT8 and NAT8B. Interacts with BIN1. Interacts (via extracellular domain) with ADAM10 (via extracellular domain). Interacts with SORL1; this interaction may affect binding with APP and hence reduce APP cleavage. Interacts with NRDC AND NRG1. Post-translationally, palmitoylation mediates lipid raft localization. In terms of processing, acetylated in the endoplasmic reticulum at Lys-123, Lys-247, Lys-251, Lys-257, Lys-271, Lys-272, and Lys-279. Acetylation by NAT8 and NAT8B is transient and deacetylation probably occurs in the Golgi. Acetylation regulates the maturation, the transport to the plasma membrane, the stability and the expression of the protein. Ubiquitinated at Lys-473, ubiquitination leads to lysosomal degradation. Monoubiquitinated and 'Lys-63'-linked polyubitinated. Deubiquitnated by USP8; inhibits lysosomal degradation. Post-translationally, phosphorylation at Ser-470 is required for interaction with GGA1 and retrograded transport from endosomal compartments to the trans-Golgi network. Non-phosphorylated BACE1 enters a direct recycling route to the cell surface. In terms of processing, N-Glycosylated. Addition of a bisecting N-acetylglucosamine by MGAT3 blocks lysosomal targeting, further degradation and is required for maintaining stability under stress conditions.

The protein resides in the cell membrane. It localises to the golgi apparatus. It is found in the trans-Golgi network. Its subcellular location is the endoplasmic reticulum. The protein localises to the endosome. The protein resides in the cell surface. It localises to the cytoplasmic vesicle membrane. It is found in the membrane raft. Its subcellular location is the lysosome. The protein localises to the late endosome. The protein resides in the early endosome. It localises to the recycling endosome. It is found in the cell projection. Its subcellular location is the axon. The protein localises to the dendrite. The enzyme catalyses Broad endopeptidase specificity. Cleaves Glu-Val-Asn-Leu-|-Asp-Ala-Glu-Phe in the Swedish variant of Alzheimer's amyloid precursor protein.. With respect to regulation, inhibited by RTN3 and RTN4. In terms of biological role, responsible for the proteolytic processing of the amyloid precursor protein (APP). Cleaves at the N-terminus of the A-beta peptide sequence, between residues 671 and 672 of APP, leads to the generation and extracellular release of beta-cleaved soluble APP, and a corresponding cell-associated C-terminal fragment which is later released by gamma-secretase. Cleaves CHL1. This chain is Beta-secretase 1 (BACE1), found in Cavia porcellus (Guinea pig).